Here is a 268-residue protein sequence, read N- to C-terminus: Secreted RxLR effector protein 6 (268 aa).

Residues 1–19 form the signal peptide; it reads MRGAFYIAIALLVVRSRTA. Residues 48–63 carry the RxLR-dEER motif; that stretch reads RYLRDGLAHSAANEER. The disordered stretch occupies residues 90–123; sequence IGGHSHTPKSKRKVNLSPAKSQSGIRKKSTSINK. The span at 107 to 123 shows a compositional bias: polar residues; the sequence is PAKSQSGIRKKSTSINK.

The protein belongs to the RxLR effector family.

The protein localises to the secreted. It localises to the host nucleus. Its subcellular location is the host cytoplasm. Functionally, secreted effector that completely suppresses the host cell death induced by cell death-inducing proteins. This Plasmopara viticola (Downy mildew of grapevine) protein is Secreted RxLR effector protein 6.